The primary structure comprises 578 residues: Arginine--tRNA ligase (578 aa).

Positions 127 to 137 match the 'HIGH' region motif; it reads PNLAKEMHVGH.

It belongs to the class-I aminoacyl-tRNA synthetase family. In terms of assembly, monomer.

The protein localises to the cytoplasm. The enzyme catalyses tRNA(Arg) + L-arginine + ATP = L-arginyl-tRNA(Arg) + AMP + diphosphate. This Pseudomonas putida (strain ATCC 47054 / DSM 6125 / CFBP 8728 / NCIMB 11950 / KT2440) protein is Arginine--tRNA ligase.